The following is a 256-amino-acid chain: Type III pantothenate kinase (256 aa).

Residue 6–13 participates in ATP binding; sequence DIGNTNIV. Residue 107 to 110 participates in substrate binding; sequence GADI. The active-site Proton acceptor is aspartate 109. A K(+)-binding site is contributed by aspartate 129. Threonine 132 serves as a coordination point for ATP. Threonine 184 lines the substrate pocket.

This sequence belongs to the type III pantothenate kinase family. In terms of assembly, homodimer. Requires NH4(+) as cofactor. It depends on K(+) as a cofactor.

It localises to the cytoplasm. It carries out the reaction (R)-pantothenate + ATP = (R)-4'-phosphopantothenate + ADP + H(+). The protein operates within cofactor biosynthesis; coenzyme A biosynthesis; CoA from (R)-pantothenate: step 1/5. Its function is as follows. Catalyzes the phosphorylation of pantothenate (Pan), the first step in CoA biosynthesis. This chain is Type III pantothenate kinase, found in Bifidobacterium longum (strain DJO10A).